Consider the following 807-residue polypeptide: MSEIEEKFNESSYGADSIKVLKGLEAVRKRPGMYIGDVGDGSGLHHMIYEVVDNAIDESLAGYCDLVRVTLNKNGSVTVSDNGRGIPVEIHGEEGISAAEVIMTQLHAGGKFDQNAYKVAGGLHGVGVSVVNALSEWLELRIWRNNKEYLMRFNNGITEAPLAVVKENIDKKGTEVTFFPSVETFTNIEFDFGTIEHRLRELAFLNSGVKILLVDNRFEEVKEVEFYYTGGIEAYVKYIDRAKHAIHPCIVVNTENAESGISLELAMHWNDSYHENILCFTNNIRQRDGGTHLSAFKSAITRVITSYLDTTGLNKKAKNYFSGEDTREGLCCVLSVKVPDPKFSSQTKDKLVSSEVRPVVENAVYTKVLEWFEEHPAEAKAIIAKIMEAANAREAARKARELTRRKSALEVSNLPGKLADCHAKDPAISELFIVEGDSAGGTAKQGRDSKIQAILPLRGKILNVERARFDKMLGSDQIGTLITALGISVEREFSLEKLRYHKVIIMTDADVDGSHIRTLLLTFFYRHMPELINKGYLYIAQPPLYKVKKGAAEFYLKNEQALQDYLIKSTINDATLILDDKERLVGDNLEELINKVVKFNGLLDHASKKFNRSITEILAINDLLNNKIFEPESDLRLKKALDVLNSLEDSPDKTNWEVLKHENKIEFFRFSRGLKESKILLKEQLESFEFVQISKFALTIFDIFSKQLKLIVKSQEFDILTPSQLLNTIIECGKRGINIQRFKGLGEMNSDQLWETTLDPTKRTLLQVRVAEIDEAEGIFSTLMGDVVEPRRLFIQANALNVVNLDV.

The Toprim domain occupies 429–543 (SELFIVEGDS…KGYLYIAQPP (115 aa)). Mg(2+)-binding residues include Glu-435, Asp-508, and Asp-510.

The protein belongs to the type II topoisomerase GyrB family. As to quaternary structure, heterotetramer, composed of two GyrA and two GyrB chains. In the heterotetramer, GyrA contains the active site tyrosine that forms a transient covalent intermediate with DNA, while GyrB binds cofactors and catalyzes ATP hydrolysis. Mg(2+) is required as a cofactor. Mn(2+) serves as cofactor. The cofactor is Ca(2+).

The protein resides in the cytoplasm. It catalyses the reaction ATP-dependent breakage, passage and rejoining of double-stranded DNA.. In terms of biological role, a type II topoisomerase that negatively supercoils closed circular double-stranded (ds) DNA in an ATP-dependent manner to modulate DNA topology and maintain chromosomes in an underwound state. Negative supercoiling favors strand separation, and DNA replication, transcription, recombination and repair, all of which involve strand separation. Also able to catalyze the interconversion of other topological isomers of dsDNA rings, including catenanes and knotted rings. Type II topoisomerases break and join 2 DNA strands simultaneously in an ATP-dependent manner. The polypeptide is DNA gyrase subunit B (Rickettsia conorii (strain ATCC VR-613 / Malish 7)).